The chain runs to 1403 residues: Centrosomal protein of 162 kDa (1403 aa).

Positions 19-44 are disordered; the sequence is ELSDDSFENSNETPSQPNKDRKKKDT. Residues 26 to 35 show a composition bias toward polar residues; sequence ENSNETPSQP. Ser156 and Ser159 each carry phosphoserine. Disordered stretches follow at residues 171–235, 305–342, and 449–586; these read NVEP…EKTG, DTGE…TTES, and NPSL…SDDS. Basic and acidic residues predominate over residues 176–189; it reads EGGRENESEHKELP. Residues 192 to 204 are compositionally biased toward acidic residues; the sequence is YSDDFEDAEDTDE. Basic and acidic residues predominate over residues 206–220; sequence LITKDEETRPKENPE. The segment covering 449–466 has biased composition (polar residues); it reads NPSLLPQDNKANQTSRSR. The residue at position 468 (Ser468) is a Phosphoserine. Residues 481–496 are compositionally biased toward basic residues; that stretch reads PCKKARSAPPLPRRKP. Residues 504–517 show a composition bias toward polar residues; sequence ARSSGYSKPSSPLQ. Basic and acidic residues-rich tracts occupy residues 522–532 and 567–581; these read LEKKTSKDNTK and PHRE…RPED. 3 coiled-coil regions span residues 610 to 1120, 1170 to 1205, and 1234 to 1385; these read KRAQ…MLSR, EVLE…QLES, and CQNA…LHRQ.

The protein belongs to the CEP162 family. As to quaternary structure, interacts with alpha-tubulin. Interacts with CPNE4. Interacts with CEP290.

Its subcellular location is the cytoplasm. It is found in the cytoskeleton. The protein resides in the microtubule organizing center. It localises to the centrosome. The protein localises to the centriole. Its subcellular location is the spindle. It is found in the nucleus. Required to promote assembly of the transition zone in primary cilia. Acts by specifically recognizing and binding the axonemal microtubule. Localizes to the distal ends of centrioles before ciliogenesis and directly binds to axonemal microtubule, thereby promoting and restricting transition zone formation specifically at the cilia base. Required to mediate CEP290 association with microtubules. This is Centrosomal protein of 162 kDa (Cep162) from Rattus norvegicus (Rat).